The primary structure comprises 144 residues: Putative sugar phosphate isomerase RT0290 (144 aa).

Substrate is bound at residue histidine 12. Histidine 101 acts as the Proton donor in catalysis. Arginine 135 lines the substrate pocket.

It belongs to the LacAB/RpiB family.

This is Putative sugar phosphate isomerase RT0290 from Rickettsia typhi (strain ATCC VR-144 / Wilmington).